The chain runs to 321 residues: uncharacterized protein (321 aa).

Basic residues predominate over residues 1 to 12; the sequence is MSMFLKKQKKTK. Disordered regions lie at residues 1–59 and 71–289; these read MSMF…MRKT and EDCT…GPED. A compositionally biased stretch (basic and acidic residues) spans 50–59; it reads DGIKETMRKT. Positions 99 to 115 are enriched in acidic residues; that stretch reads DDSDSESSEDGGEDDEE. Residues 156 to 175 are compositionally biased toward low complexity; it reads SDSSSSSSSSSDSESSSSSD. Basic and acidic residues predominate over residues 179 to 189; it reads DGDRSTPEPDI. Low complexity predominate over residues 231 to 242; it reads EPSPLRAAAAAA.

This is an uncharacterized protein from Equus caballus (Horse).